Here is a 600-residue protein sequence, read N- to C-terminus: Epidermal growth factor receptor kinase substrate 8-like protein 3 (600 aa).

Residues 28–155 enclose the PTB domain; it reads QHRVEHLMTC…ALEEELEERP (128 aa). 2 disordered regions span residues 152–245 and 429–452; these read EERP…PERD and LHFPRDEPYNHNPEYEDSNLPLSS. Residues 204–214 show a composition bias toward low complexity; sequence SERSISPSSRS. S238 carries the phosphoserine modification. An SH3 domain is found at 457–516; the sequence is RAALKMQVLYEFEARNAQELTVAQGEILEVLDQSKRWWLVKNEAGLTGYIPSNILEPLPA.

It belongs to the EPS8 family. Interacts with ABI1. Part of a complex that contains SOS1, ABI1 and EPS8L2. Interacts with FASLG. Detected in embryonic gut. Detected in adult testis, placenta, adrenal gland and intestine.

Its subcellular location is the cytoplasm. The polypeptide is Epidermal growth factor receptor kinase substrate 8-like protein 3 (Eps8l3) (Mus musculus (Mouse)).